The primary structure comprises 628 residues: Eukaryotic peptide chain release factor GTP-binding subunit ERF3B (628 aa).

Positions 1–10 are enriched in low complexity; the sequence is MDSGSSSSDS. Disordered regions lie at residues 1–49, 72–124, and 146–195; these read MDSG…SAFS, FLRG…LEGS, and LEES…VIVP. The tr-type G domain occupies 201 to 425; that stretch reads KEHVNVVFIG…YLDNLPNFNR (225 aa). The interval 210–217 is G1; the sequence is GHVDAGKS. A GTP-binding site is contributed by 213–218; it reads DAGKST. A G2 region spans residues 266–270; that stretch reads GKTVE. Positions 287 to 290 are G3; sequence DAPG. GTP-binding positions include 349-352 and 391-393; these read NKMD and SGL. Residues 349–352 form a G4 region; sequence NKMD. The G5 stretch occupies residues 391 to 393; the sequence is SGL.

The protein belongs to the TRAFAC class translation factor GTPase superfamily. Classic translation factor GTPase family. ERF3 subfamily. As to quaternary structure, component of the eRF1-eRF3-GTP ternary complex, composed of ETF1/ERF1 and ERF3 (GSPT1/ERF3A or GSPT2/ERF3B) and GTP. Component of the transient SURF (SMG1-UPF1-eRF1-eRF3) complex. Interacts with UPF1 and PABPC1. As to expression, highly expressed in IUCC stage II colorectal cancer (CRC).

It localises to the cytoplasm. It carries out the reaction GTP + H2O = GDP + phosphate + H(+). Functionally, GTPase component of the eRF1-eRF3-GTP ternary complex, a ternary complex that mediates translation termination in response to the termination codons UAA, UAG and UGA. GSPT2/ERF3B mediates ETF1/ERF1 delivery to stop codons: The eRF1-eRF3-GTP complex binds to a stop codon in the ribosomal A-site. GTP hydrolysis by GSPT2/ERF3B induces a conformational change that leads to its dissociation, permitting ETF1/ERF1 to accommodate fully in the A-site. Component of the transient SURF complex which recruits UPF1 to stalled ribosomes in the context of nonsense-mediated decay (NMD) of mRNAs containing premature stop codons. The chain is Eukaryotic peptide chain release factor GTP-binding subunit ERF3B (GSPT2) from Homo sapiens (Human).